A 170-amino-acid chain; its full sequence is Adenine phosphoribosyltransferase (170 aa).

It belongs to the purine/pyrimidine phosphoribosyltransferase family. Homodimer.

The protein localises to the cytoplasm. The enzyme catalyses AMP + diphosphate = 5-phospho-alpha-D-ribose 1-diphosphate + adenine. It participates in purine metabolism; AMP biosynthesis via salvage pathway; AMP from adenine: step 1/1. In terms of biological role, catalyzes a salvage reaction resulting in the formation of AMP, that is energically less costly than de novo synthesis. In Thermotoga sp. (strain RQ2), this protein is Adenine phosphoribosyltransferase.